A 493-amino-acid chain; its full sequence is ATP synthase subunit beta (493 aa).

169 to 176 (GGAGVGKT) contacts ATP.

It belongs to the ATPase alpha/beta chains family. In terms of assembly, F-type ATPases have 2 components, CF(1) - the catalytic core - and CF(0) - the membrane proton channel. CF(1) has five subunits: alpha(3), beta(3), gamma(1), delta(1), epsilon(1). CF(0) has three main subunits: a(1), b(2) and c(9-12). The alpha and beta chains form an alternating ring which encloses part of the gamma chain. CF(1) is attached to CF(0) by a central stalk formed by the gamma and epsilon chains, while a peripheral stalk is formed by the delta and b chains.

It is found in the cell inner membrane. The catalysed reaction is ATP + H2O + 4 H(+)(in) = ADP + phosphate + 5 H(+)(out). In terms of biological role, produces ATP from ADP in the presence of a proton gradient across the membrane. The catalytic sites are hosted primarily by the beta subunits. This is ATP synthase subunit beta from Gluconacetobacter diazotrophicus (strain ATCC 49037 / DSM 5601 / CCUG 37298 / CIP 103539 / LMG 7603 / PAl5).